A 373-amino-acid chain; its full sequence is Flagellar P-ring protein (373 aa).

The first 28 residues, 1 to 28 (MPSVSAVILKLAAAALSALLLSGVAANA), serve as a signal peptide directing secretion.

The protein belongs to the FlgI family. As to quaternary structure, the basal body constitutes a major portion of the flagellar organelle and consists of four rings (L,P,S, and M) mounted on a central rod.

It is found in the periplasm. It localises to the bacterial flagellum basal body. Functionally, assembles around the rod to form the L-ring and probably protects the motor/basal body from shearing forces during rotation. The polypeptide is Flagellar P-ring protein (Rhodopseudomonas palustris (strain HaA2)).